The chain runs to 741 residues: uncharacterized protein (741 aa).

5 helical membrane passes run 34 to 54 (WLLW…LLII), 76 to 96 (LIIP…FING), 120 to 140 (LAVL…FVSL), 156 to 176 (LSVF…LIII), and 187 to 207 (LLLL…AFSI). Residues 404 to 423 (EAEEKERQEKEEKEKAEKDN) show a composition bias toward basic and acidic residues. Disordered stretches follow at residues 404 to 473 (EAEE…FRPR) and 555 to 647 (QKEL…ENAK). Polar residues predominate over residues 424–439 (GNGQDSNKVNSVSTEP). 2 stretches are compositionally biased toward basic and acidic residues: residues 445 to 465 (SDAD…DSSK) and 555 to 573 (QKEL…DQKS). Over residues 623–643 (DNTDESEDKQSEEEEKFDEEI) the composition is skewed to acidic residues. 2 helical membrane passes run 655 to 675 (AFFN…ENGA) and 715 to 735 (VIIA…FFAY).

It to M.pneumoniae MPN_333.

Its subcellular location is the cell membrane. This is an uncharacterized protein from Mycoplasma pneumoniae (strain ATCC 29342 / M129 / Subtype 1) (Mycoplasmoides pneumoniae).